A 238-amino-acid chain; its full sequence is UPF0280 protein Msm_0088 (238 aa).

This sequence belongs to the UPF0280 family.

In Methanobrevibacter smithii (strain ATCC 35061 / DSM 861 / OCM 144 / PS), this protein is UPF0280 protein Msm_0088.